A 446-amino-acid polypeptide reads, in one-letter code: Coagulation factor VII (446 aa).

The signal sequence occupies residues 1-24 (MVPQTHGLLLLYFLLQLQGPLGAV). The propeptide occupies 25-41 (VFITQEEAHGVLHRQRR). Positions 42–86 (ANSLLEELWSSSLERECNEERCSFEEAREIFKSPERTKQFWTIYS) constitute a Gla domain. Residues Glu-47, Glu-48, Glu-55, Glu-57, Glu-60, Glu-61, Glu-66, Glu-67, Glu-70, and Glu-76 each carry the 4-carboxyglutamate modification. Cys-58 and Cys-63 are oxidised to a cystine. The region spanning 87-123 (DGDQCASNPCQNGGTCQDHLKSYVCFCPLDFEGRNCE) is the EGF-like 1; calcium-binding domain. Disulfide bonds link Cys-91–Cys-102, Cys-96–Cys-111, Cys-113–Cys-122, Cys-132–Cys-143, Cys-139–Cys-153, Cys-155–Cys-168, Cys-176–Cys-303, Cys-200–Cys-205, Cys-219–Cys-235, and Cys-351–Cys-370. Residue Ser-93 is glycosylated (O-linked (Glc...) serine; alternate). Ser-93 carries O-linked (Xyl...) serine; alternate glycosylation. O-linked (Fuc) threonine glycosylation is present at Thr-101. Position 104 is a (3R)-3-hydroxyaspartate (Asp-104). The EGF-like 2 domain occupies 128–169 (EQLICANENGDCDQYCRDHVGTKRTCSCHEDYVLQPDEVSCK). Residue Asn-186 is glycosylated (N-linked (GlcNAc...) asparagine). Positions 194 to 433 (IVGGYVCPKG…YIDWLVKYMD (240 aa)) constitute a Peptidase S1 domain. The Charge relay system role is filled by His-234. The N-linked (GlcNAc...) asparagine glycan is linked to Asn-244. The active-site Charge relay system is Asp-283. Residue Asp-379 participates in substrate binding. Cys-381 and Cys-409 are disulfide-bonded. The Charge relay system role is filled by Ser-385.

The protein belongs to the peptidase S1 family. As to quaternary structure, heterodimer of a light chain and a heavy chain linked by a disulfide bond. In terms of processing, the vitamin K-dependent, enzymatic carboxylation of some glutamate residues allows the modified protein to bind calcium. The iron and 2-oxoglutarate dependent 3-hydroxylation of aspartate and asparagine is (R) stereospecific within EGF domains. Post-translationally, can be either O-glucosylated or O-xylosylated at Ser-93 by POGLUT1. As to expression, plasma.

It localises to the secreted. It carries out the reaction Selective cleavage of Arg-|-Ile bond in factor X to form factor Xa.. Initiates the extrinsic pathway of blood coagulation. Serine protease that circulates in the blood in a zymogen form. Factor VII is converted to factor VIIa by factor Xa, factor XIIa, factor IXa, or thrombin by minor proteolysis. In the presence of tissue factor and calcium ions, factor VIIa then converts factor X to factor Xa by limited proteolysis. Factor VIIa also converts factor IX to factor IXa in the presence of tissue factor and calcium. This chain is Coagulation factor VII (F7), found in Rattus norvegicus (Rat).